We begin with the raw amino-acid sequence, 232 residues long: Large ribosomal subunit protein uL1 (232 aa).

The protein belongs to the universal ribosomal protein uL1 family. As to quaternary structure, part of the 50S ribosomal subunit.

Binds directly to 23S rRNA. The L1 stalk is quite mobile in the ribosome, and is involved in E site tRNA release. Functionally, protein L1 is also a translational repressor protein, it controls the translation of the L11 operon by binding to its mRNA. The sequence is that of Large ribosomal subunit protein uL1 from Coxiella burnetii (strain CbuK_Q154) (Coxiella burnetii (strain Q154)).